We begin with the raw amino-acid sequence, 249 residues long: Transcriptional activator protein EsaR (249 aa).

Positions 174-239 (QSADKTIFSS…QAIRLGVELD (66 aa)) constitute an HTH luxR-type domain. A DNA-binding region (H-T-H motif) is located at residues 198 to 217 (YAEIAAITGISVSTVKFHIK).

It belongs to the autoinducer-regulated transcriptional regulatory protein family.

Functionally, functions as a potential OhlL-responsive transcriptional regulator. This chain is Transcriptional activator protein EsaR (esaR), found in Pantoea stewartii subsp. stewartii (Erwinia stewartii).